The primary structure comprises 288 residues: NH(3)-dependent NAD(+) synthetase (288 aa).

46–53 (GISGGQDS) is an ATP binding site. Asp52 is a binding site for Mg(2+). Position 153 (Arg153) interacts with deamido-NAD(+). Residue Thr173 participates in ATP binding. Glu178 contributes to the Mg(2+) binding site. Positions 186 and 193 each coordinate deamido-NAD(+). Lys202 and Thr224 together coordinate ATP. 273–274 (HK) contributes to the deamido-NAD(+) binding site.

Belongs to the NAD synthetase family. In terms of assembly, homodimer.

It catalyses the reaction deamido-NAD(+) + NH4(+) + ATP = AMP + diphosphate + NAD(+) + H(+). The protein operates within cofactor biosynthesis; NAD(+) biosynthesis; NAD(+) from deamido-NAD(+) (ammonia route): step 1/1. Its function is as follows. Catalyzes the ATP-dependent amidation of deamido-NAD to form NAD. Uses ammonia as a nitrogen source. This chain is NH(3)-dependent NAD(+) synthetase, found in Deinococcus geothermalis (strain DSM 11300 / CIP 105573 / AG-3a).